Here is a 43-residue protein sequence, read N- to C-terminus: uncharacterized protein (43 aa).

Over residues 1–37 (MIIKNNNNNNNNNNNNNNNNNNNNNNNNNNNNNNNNN) the composition is skewed to low complexity. The interval 1–43 (MIIKNNNNNNNNNNNNNNNNNNNNNNNNNNNNNNNNNIEIIIK) is disordered.

This is an uncharacterized protein from Dictyostelium discoideum (Social amoeba).